Reading from the N-terminus, the 322-residue chain is tRNA U34 carboxymethyltransferase (322 aa).

Carboxy-S-adenosyl-L-methionine contacts are provided by residues lysine 92, tryptophan 106, lysine 111, glycine 131, 153–155 (DPS), 181–182 (VE), methionine 196, tyrosine 200, and arginine 315.

It belongs to the class I-like SAM-binding methyltransferase superfamily. CmoB family. In terms of assembly, homotetramer.

It catalyses the reaction carboxy-S-adenosyl-L-methionine + 5-hydroxyuridine(34) in tRNA = 5-carboxymethoxyuridine(34) in tRNA + S-adenosyl-L-homocysteine + H(+). Its function is as follows. Catalyzes carboxymethyl transfer from carboxy-S-adenosyl-L-methionine (Cx-SAM) to 5-hydroxyuridine (ho5U) to form 5-carboxymethoxyuridine (cmo5U) at position 34 in tRNAs. The protein is tRNA U34 carboxymethyltransferase of Pseudoalteromonas translucida (strain TAC 125).